Here is a 463-residue protein sequence, read N- to C-terminus: Rubisco accumulation factor 1, chloroplastic (463 aa).

Residues 1 to 18 are compositionally biased toward low complexity; it reads MLSLSHPHPHPAASTTAP. The N-terminal 31 residues, 1–31, are a transit peptide targeting the chloroplast; the sequence is MLSLSHPHPHPAASTTAPRHQRTAPVWHRRR. A disordered region spans residues 1-84; that stretch reads MLSLSHPHPH…PFHPPPSPLP (84 aa). Residues 19 to 33 show a composition bias toward basic residues; it reads RHQRTAPVWHRRRAS. Residues 43-53 are compositionally biased toward gly residues; the sequence is PGGGSTGGRGG. An N-terminal alpha-helix region spans residues 83–275; the sequence is LPPSLRNLDL…SGRARVELEL (193 aa). Residues 240–294 are a coiled coil; it reads RQSREAIDVQDRVAELERALQVVETESGRARVELELERARRKAAGEEEVDEEGEE. A C-terminal beta sheet region spans residues 305–450; it reads VTVVRLRYGE…AEVVIVVRPP (146 aa).

This sequence belongs to the RAF family. Homotrimer. As to expression, expressed in bundle sheath.

The protein resides in the plastid. It localises to the chloroplast. In terms of biological role, required for assembly or stability of RuBisCO. Acts at a postchaperonin step to fold and/or assemble the large subunit (LS) into RuBisCO. This Zea mays (Maize) protein is Rubisco accumulation factor 1, chloroplastic.